A 427-amino-acid chain; its full sequence is Delta(14)-sterol reductase (427 aa).

Residues 1-25 (MSEQESRDNAAVDAVRQKYGFGFSW) are Cytoplasmic-facing. The chain crosses the membrane as a helical span at residues 26-46 (LVLMIALPPLVYYLWICVTYY). At 47-70 (QGELVFTSDAAAWRRFWSHVAPPT) the chain is on the periplasmic side. Residues 71-91 (WHAAGLYAAWFLGQAALQVWA) form a helical membrane-spanning segment. Residues 92–110 (PGPTVQGMKLPDGSRLDYR) lie on the Cytoplasmic side of the membrane. A helical membrane pass occupies residues 111 to 131 (MNGIFSFLFTLAVVFGLVTMG). Topologically, residues 132-141 (WLDATVLYDQ) are periplasmic. The helical transmembrane segment at 142–162 (LGPLLTVVNIFTFVFAGFLYF) threads the bilayer. The Cytoplasmic segment spans residues 163–197 (WGLNGKQWERPTGRPFYDYFMGTALNPRIGSLDLK). Residues 198–218 (LFCEARPGMIFWLLMNLSMAA) traverse the membrane as a helical segment. Over 219 to 226 (KQYELHGT) the chain is Periplasmic. A helical transmembrane segment spans residues 227–247 (VTVPMLLVVGFQSFYLIDYFI). Over 248–262 (HEEAVLTTWDIKHEK) the chain is Cytoplasmic. A helical transmembrane segment spans residues 263–283 (FGWMLCWGDLVWLPFTYTLQA). At 284 to 291 (QYLVHHTH) the chain is on the periplasmic side. A helical transmembrane segment spans residues 292–312 (DLPVWGIIAIVALNLAGYAIF). The Cytoplasmic portion of the chain corresponds to 313–356 (RGANIQKHHFRRDPNRIVWGKPAKYIKTKQGSLLLTSGWWGIAR). NADP(+)-binding positions include K319, R323, L347, W352, and 359–360 (NY). A helical transmembrane segment spans residues 357–377 (HMNYFGDLMIALSWCLPAAFG). Position 378 (S378) is a topological domain, periplasmic. A helical membrane pass occupies residues 379–399 (PIPYFHIVYFTILLLHREKRD). NADP(+) contacts are provided by residues D399, 403 to 407 (CLAKY), and Y414. Over 400–427 (DAMCLAKYGEDWLQYRKKVPWRIVPKIY) the chain is Cytoplasmic.

This sequence belongs to the ERG4/ERG24 family.

The protein localises to the cell inner membrane. It carries out the reaction 4,4-dimethyl-5alpha-cholesta-8,24-dien-3beta-ol + NADP(+) = 4,4-dimethyl-5alpha-cholesta-8,14,24-trien-3beta-ol + NADPH + H(+). It functions in the pathway steroid biosynthesis; zymosterol biosynthesis; zymosterol from lanosterol. Functionally, reduces the C14=C15 double bond of 4,4-dimethyl-cholesta-8,14,24-trienol to produce 4,4-dimethyl-cholesta-8,24-dienol. Complements the deletion of the Delta(14)-sterol reductase gene ERG24 in yeast. This Methylotuvimicrobium alcaliphilum (strain DSM 19304 / NCIMB 14124 / VKM B-2133 / 20Z) (Methylomicrobium alcaliphilum) protein is Delta(14)-sterol reductase.